Consider the following 214-residue polypeptide: GTP-binding nuclear protein GSP1 (214 aa).

Residues 4 to 172 form the Small GTPase Ran-type domain; it reads RELTYKICLI…LHLARIFTGR (169 aa). Residue 17–22 participates in GTP binding; that stretch reads GVGKTT. The interval 34-42 is switch-I; that stretch reads KNYNATVGA. GTP-binding positions include G66, 121–124, and 151–153; these read NKID and SAK. The interval 66-82 is switch-II; it reads GQEKKAVLKDVYYIGAS.

It belongs to the small GTPase superfamily. Ran family. Found in a nuclear export complex with RanGTP, exportin and pre-miRNA.

It is found in the nucleus. Functionally, GTP-binding protein involved in nucleocytoplasmic transport. Required for the import of protein into the nucleus and also for RNA export. The polypeptide is GTP-binding nuclear protein GSP1 (GSP1) (Encephalitozoon cuniculi (strain GB-M1) (Microsporidian parasite)).